Consider the following 582-residue polypeptide: Putative BTB/POZ domain-containing protein At3g08660 (582 aa).

Residues 1–21 (MGSDSTLSLPSSSPPCNNRSS) form a disordered region. Positions 36–103 (GDIIVVVDGE…CYGINFDITA (68 aa)) constitute a BTB domain. In terms of domain architecture, NPH3 spans 196–466 (EMWTEELSAL…VRVLYTEQLR (271 aa)). The residue at position 407 (Y407) is a Phosphotyrosine. Residues 558-582 (GGETRQKVNRKSRSVSERKSSRSGR) form a disordered region. Over residues 571 to 582 (SVSERKSSRSGR) the composition is skewed to basic and acidic residues.

Belongs to the NPH3 family.

Its pathway is protein modification; protein ubiquitination. Its function is as follows. May act as a substrate-specific adapter of an E3 ubiquitin-protein ligase complex (CUL3-RBX1-BTB) which mediates the ubiquitination and subsequent proteasomal degradation of target proteins. The chain is Putative BTB/POZ domain-containing protein At3g08660 from Arabidopsis thaliana (Mouse-ear cress).